Reading from the N-terminus, the 234-residue chain is L-cystine transport system permease protein TcyB (234 aa).

A run of 5 helical transmembrane segments spans residues 8–28 (ALTLGTAIPWDLVQQSFWPIL), 36–56 (IPLTILSFIFGMILALITALA), 78–98 (TPLLVQLFIIFYLFPAFNVTL), 100–120 (PFPSAVIAFSLNVGAYASEII), and 199–219 (ILVIYIEAAFIYWIICFLLSL). Residues 32–221 (IYYTIPLTIL…IICFLLSLVQ (190 aa)) form the ABC transmembrane type-1 domain.

This sequence belongs to the binding-protein-dependent transport system permease family. As to quaternary structure, the complex is composed of two ATP-binding proteins (TcyC), two transmembrane proteins (TcyB) and a solute-binding protein (TcyA).

It is found in the cell membrane. In terms of biological role, part of the ABC transporter complex TcyABC involved in L-cystine import. Probably responsible for the translocation of the substrate across the membrane. The protein is L-cystine transport system permease protein TcyB (tcyB) of Bacillus subtilis (strain 168).